A 213-amino-acid polypeptide reads, in one-letter code: Redox-sensing transcriptional repressor Rex (213 aa).

The segment at residues 18 to 57 is a DNA-binding region (H-T-H motif); sequence LYYRFLKNLHASGKQRVSSAELSEAVKVDPATIRRDFSYF. 92–97 contacts NAD(+); it reads GVGNLG.

The protein belongs to the transcriptional regulatory Rex family. As to quaternary structure, homodimer.

Its subcellular location is the cytoplasm. Functionally, modulates transcription in response to changes in cellular NADH/NAD(+) redox state. The sequence is that of Redox-sensing transcriptional repressor Rex from Geobacillus kaustophilus (strain HTA426).